The following is a 348-amino-acid chain: Protein-glutamate methylesterase/protein-glutamine glutaminase 2 (348 aa).

Residues 5 to 122 form the Response regulatory domain; sequence KVLIIDDSAL…DLGLSQYRDE (118 aa). Residue D56 is modified to 4-aspartylphosphate. In terms of domain architecture, CheB-type methylesterase spans 157–348; it reads SLKTGFLCAI…AANIIKHALK (192 aa). Residues S169, H195, and D291 contribute to the active site.

Belongs to the CheB family. In terms of processing, phosphorylated by CheA. Phosphorylation of the N-terminal regulatory domain activates the methylesterase activity.

It localises to the cytoplasm. It catalyses the reaction [protein]-L-glutamate 5-O-methyl ester + H2O = L-glutamyl-[protein] + methanol + H(+). The catalysed reaction is L-glutaminyl-[protein] + H2O = L-glutamyl-[protein] + NH4(+). In terms of biological role, involved in chemotaxis. Part of a chemotaxis signal transduction system that modulates chemotaxis in response to various stimuli. Catalyzes the demethylation of specific methylglutamate residues introduced into the chemoreceptors (methyl-accepting chemotaxis proteins or MCP) by CheR. Also mediates the irreversible deamidation of specific glutamine residues to glutamic acid. The chain is Protein-glutamate methylesterase/protein-glutamine glutaminase 2 from Saccharophagus degradans (strain 2-40 / ATCC 43961 / DSM 17024).